The sequence spans 188 residues: Putative manganese efflux pump MntP (188 aa).

A run of 6 helical transmembrane segments spans residues 3–23, 35–55, 63–83, 104–126, 140–160, and 167–187; these read FYAL…VALA, IAAT…AGWV, FISE…GLKM, WMTV…GLAF, MATT…GVLF, and AGGL…LGLI.

It belongs to the MntP (TC 9.B.29) family.

It is found in the cell inner membrane. In terms of biological role, probably functions as a manganese efflux pump. The chain is Putative manganese efflux pump MntP from Neisseria meningitidis serogroup B (strain ATCC BAA-335 / MC58).